Here is a 352-residue protein sequence, read N- to C-terminus: Selenide, water dikinase (352 aa).

Cys-21 is an active-site residue. ATP is bound by residues Lys-24 and 51–53 (TND). Asp-54 lines the Mg(2+) pocket. ATP is bound by residues Asp-71, Asp-94, and 141–143 (GHS). Residue Asp-94 coordinates Mg(2+). Asp-231 serves as a coordination point for Mg(2+).

The protein belongs to the selenophosphate synthase 1 family. Class I subfamily. As to quaternary structure, homodimer. The cofactor is Mg(2+).

It carries out the reaction hydrogenselenide + ATP + H2O = selenophosphate + AMP + phosphate + 2 H(+). In terms of biological role, synthesizes selenophosphate from selenide and ATP. This is Selenide, water dikinase from Myxococcus xanthus (strain DK1622).